Here is a 212-residue protein sequence, read N- to C-terminus: Methylthioribulose-1-phosphate dehydratase (212 aa).

Zn(2+) contacts are provided by H99 and H101.

Belongs to the aldolase class II family. MtnB subfamily. As to quaternary structure, homotetramer. Zn(2+) is required as a cofactor.

It carries out the reaction 5-(methylsulfanyl)-D-ribulose 1-phosphate = 5-methylsulfanyl-2,3-dioxopentyl phosphate + H2O. It participates in amino-acid biosynthesis; L-methionine biosynthesis via salvage pathway; L-methionine from S-methyl-5-thio-alpha-D-ribose 1-phosphate: step 2/6. Catalyzes the dehydration of methylthioribulose-1-phosphate (MTRu-1-P) into 2,3-diketo-5-methylthiopentyl-1-phosphate (DK-MTP-1-P). This Bacillus pumilus (strain SAFR-032) protein is Methylthioribulose-1-phosphate dehydratase.